We begin with the raw amino-acid sequence, 212 residues long: MPAERPSVSQKPKNPYKRPDAFTKAAKAQGYPARSVFKLEEIDRRVRLLRPGQRVLDLGAAPGSWSMYAAQRIGAGGKLLAVDLSPITAAFGPQATVVQGDALSLTNEALAQFAPYDVVLSDMAPATSGSKIADQARSYELFMRAVAVAEALLAPGGAFVGKIFMSEDFVKARDALRNLCEEVRSIRPEGTRASSVEIFLVGLKRKAAGKTG.

The disordered stretch occupies residues 1–26 (MPAERPSVSQKPKNPYKRPDAFTKAA). S-adenosyl-L-methionine contacts are provided by Gly-63, Trp-65, Asp-83, Asp-101, and Asp-122. Lys-162 (proton acceptor) is an active-site residue.

It belongs to the class I-like SAM-binding methyltransferase superfamily. RNA methyltransferase RlmE family.

It is found in the cytoplasm. The catalysed reaction is uridine(2552) in 23S rRNA + S-adenosyl-L-methionine = 2'-O-methyluridine(2552) in 23S rRNA + S-adenosyl-L-homocysteine + H(+). Functionally, specifically methylates the uridine in position 2552 of 23S rRNA at the 2'-O position of the ribose in the fully assembled 50S ribosomal subunit. This is Ribosomal RNA large subunit methyltransferase E from Sorangium cellulosum (strain So ce56) (Polyangium cellulosum (strain So ce56)).